A 179-amino-acid polypeptide reads, in one-letter code: Large ribosomal subunit protein uL6 (179 aa).

This sequence belongs to the universal ribosomal protein uL6 family. As to quaternary structure, part of the 50S ribosomal subunit.

Functionally, this protein binds to the 23S rRNA, and is important in its secondary structure. It is located near the subunit interface in the base of the L7/L12 stalk, and near the tRNA binding site of the peptidyltransferase center. This chain is Large ribosomal subunit protein uL6, found in Chlorobium phaeobacteroides (strain BS1).